A 227-amino-acid chain; its full sequence is Phosphoribosylformylglycinamidine synthase subunit PurQ (227 aa).

The 223-residue stretch at 3–225 folds into the Glutamine amidotransferase type-1 domain; sequence FAVIVFPGSN…LKQWRETYVV (223 aa). The Nucleophile role is filled by C86. Catalysis depends on residues H194 and E196.

As to quaternary structure, part of the FGAM synthase complex composed of 1 PurL, 1 PurQ and 2 PurS subunits.

It localises to the cytoplasm. It carries out the reaction N(2)-formyl-N(1)-(5-phospho-beta-D-ribosyl)glycinamide + L-glutamine + ATP + H2O = 2-formamido-N(1)-(5-O-phospho-beta-D-ribosyl)acetamidine + L-glutamate + ADP + phosphate + H(+). The enzyme catalyses L-glutamine + H2O = L-glutamate + NH4(+). Its pathway is purine metabolism; IMP biosynthesis via de novo pathway; 5-amino-1-(5-phospho-D-ribosyl)imidazole from N(2)-formyl-N(1)-(5-phospho-D-ribosyl)glycinamide: step 1/2. Functionally, part of the phosphoribosylformylglycinamidine synthase complex involved in the purines biosynthetic pathway. Catalyzes the ATP-dependent conversion of formylglycinamide ribonucleotide (FGAR) and glutamine to yield formylglycinamidine ribonucleotide (FGAM) and glutamate. The FGAM synthase complex is composed of three subunits. PurQ produces an ammonia molecule by converting glutamine to glutamate. PurL transfers the ammonia molecule to FGAR to form FGAM in an ATP-dependent manner. PurS interacts with PurQ and PurL and is thought to assist in the transfer of the ammonia molecule from PurQ to PurL. The chain is Phosphoribosylformylglycinamidine synthase subunit PurQ from Bacillus cereus (strain Q1).